Consider the following 473-residue polypeptide: Chaperone SurA (473 aa).

The signal sequence occupies residues 1–36; the sequence is MTNDRLFAGIARVLSVRPLAAALALLLTLPLIGVQA. PpiC domains are found at residues 214-315 and 326-425; these read SLAL…KVIE and ITQT…QVLE.

It localises to the periplasm. The catalysed reaction is [protein]-peptidylproline (omega=180) = [protein]-peptidylproline (omega=0). Functionally, chaperone involved in the correct folding and assembly of outer membrane proteins. Recognizes specific patterns of aromatic residues and the orientation of their side chains, which are found more frequently in integral outer membrane proteins. May act in both early periplasmic and late outer membrane-associated steps of protein maturation. This Polaromonas sp. (strain JS666 / ATCC BAA-500) protein is Chaperone SurA.